Consider the following 938-residue polypeptide: Microperfuranone synthase (938 aa).

Residues 44 to 445 (TSTRISYAEL…AGRTKDTIIV (402 aa)) are adenylation (A) domain. Residues 579-655 (SDSERAVQKA…AIARSIDSSR (77 aa)) enclose the Carrier domain. The thiolation and peptide carrier (T) domain stretch occupies residues 581 to 652 (SERAVQKALV…TPGAIARSID (72 aa)). Position 613 is an O-(pantetheine 4'-phosphoryl)serine (Ser-613). Residues 676 to 923 (PLFCIHPGSG…AKMLNREHIA (248 aa)) form a thioesterase (TE) domain region. Ser-746 is an active-site residue.

Belongs to the ATP-dependent AMP-binding enzyme family.

It participates in secondary metabolite biosynthesis. Microperfuranone synthase is the only protein required for the biosynthesis of the secondary metabolite microperfuranone from phenylpyruvic acid (PPA). Several steps for the microperfuranione biosynthesis have been proposed. These steps include the activation of PPA, by the micA adenylation (A) domain to AMP-phenylpyruvic acid followed by loading of the PPA unit to the thiolation and peptide carrier (T) domain and eventually transferring to the thioesterase (TE) domain. After loading another PPA unit onto the T domain, aldol condensation establishes the carbon-carbon bond between the alpha- and beta-carbon of the two PPA units. Sulfur-assisted furan ring formation, TE domain mediated hydrolysis, decarboxylation, and keto-enol tautomerization would generate microperfuranone attached to the T domain. Finally, microperfuranone is released by the TE domain. The chain is Microperfuranone synthase from Emericella nidulans (strain FGSC A4 / ATCC 38163 / CBS 112.46 / NRRL 194 / M139) (Aspergillus nidulans).